The sequence spans 103 residues: Small ribosomal subunit protein uS17 (103 aa).

The segment at 78 to 103 (SHSPKADKSAGSTAPAPEAAAKEVSE) is disordered.

This sequence belongs to the universal ribosomal protein uS17 family. Part of the 30S ribosomal subunit.

Its function is as follows. One of the primary rRNA binding proteins, it binds specifically to the 5'-end of 16S ribosomal RNA. This is Small ribosomal subunit protein uS17 from Parasynechococcus marenigrum (strain WH8102).